Here is a 427-residue protein sequence, read N- to C-terminus: Isoprenylcysteine alpha-carbonyl methylesterase ICME (427 aa).

Residues 26 to 59 (EVLPDEDSDRTTLLNGEPLRRRVSGKSPVDEGPR) form a disordered region. The next 2 membrane-spanning stretches (helical) occupy residues 102-122 (LLALTCYAMLLMPGFLQVAYS) and 157-177 (VVVFVTGGAWIIGYKAWGSLL). Residues 163 to 165 (GGA) and 234 to 236 (QSA) contribute to the substrate site. Active-site residues include S235, D336, and H368.

Belongs to the AB hydrolase superfamily. Isoprenylcysteine methylesterase family. In terms of tissue distribution, expressed in roots, rosette and cauline leaves, stems, flowers and siliques.

Its subcellular location is the endoplasmic reticulum membrane. It is found in the golgi apparatus membrane. It catalyses the reaction [protein]-C-terminal S-[(2E,6E)-farnesyl]-L-cysteine methyl ester + H2O = [protein]-C-terminal S-[(2E,6E)-farnesyl]-L-cysteine + methanol + H(+). Its function is as follows. Catalyzes the demethylation of isoprenylcysteine methylesters. In vitro, is specific for N-acetyl-S-farnesyl-L-cysteine methyl ester (AFCme) and has low activity toward N-acetyl-S-geranyl-L-cysteine methyl ester (AGCme). Acts as a positive regulator of ABA signaling. May be involved in the demethylation and inactivation of isoprenylated negative regulators of abscisic acid (ABA) signaling. Carboxyl methylation is a reversible and potentially regulated step in the post-translational modification of prenylated proteins. This Arabidopsis thaliana (Mouse-ear cress) protein is Isoprenylcysteine alpha-carbonyl methylesterase ICME.